A 238-amino-acid polypeptide reads, in one-letter code: MQHSKNYRKAAAAIDRSKLYTPAEAVKLAKETTSVKFDATVEVAMRLGVDPRKADQMVRGTVNLPHGTGKTARVIVFAAGAKAEEAVAAGADEVGTDELVARIQGGWLDFDAAIATPDQMAKIGRIARILGPRGLMPNPKTGTVTMNVTKAVADIKGGKIAFRVDKHSNLHLIIGKASFSESQLVDNYAAVLDEILRAKPSAAKGKYLRKVTLTTTMGPGVPIDPNVVKNLRENSAEG.

The protein belongs to the universal ribosomal protein uL1 family. Part of the 50S ribosomal subunit.

Functionally, binds directly to 23S rRNA. The L1 stalk is quite mobile in the ribosome, and is involved in E site tRNA release. In terms of biological role, protein L1 is also a translational repressor protein, it controls the translation of the L11 operon by binding to its mRNA. This chain is Large ribosomal subunit protein uL1, found in Salinispora tropica (strain ATCC BAA-916 / DSM 44818 / JCM 13857 / NBRC 105044 / CNB-440).